A 1891-amino-acid chain; its full sequence is Transcription initiation factor TFIID subunit 1 (1891 aa).

Disordered stretches follow at residues 1 to 34 (MGPGWAGLLQDKGGGSPSVVMSDTDSDEESAGGG), 154 to 180 (KLMPPPPPPPGPLKKEKDQDDITGVSE), and 197 to 224 (ASEKVDFSSSSDSESEMGPQDAAQSESK). A Protein kinase 1 domain is found at 1–435 (MGPGWAGLLQ…VTQLHWEDDI (435 aa)). The span at 156 to 165 (MPPPPPPPGP) shows a compositional bias: pro residues. A compositionally biased stretch (low complexity) spans 197-208 (ASEKVDFSSSSD). Phosphoserine; by autocatalysis is present on S328. A disordered region spans residues 535–556 (PDEKEEATSNSPSKENKKESSL). The segment at 538 to 997 (KEEATSNSPS…KIPNKPTQQK (460 aa)) is histone acetyltransferase (HAT). At K565 the chain carries N6-acetyllysine. Residues K570 and K583 each participate in a glycyl lysine isopeptide (Lys-Gly) (interchain with G-Cter in SUMO2) cross-link. 3 disordered regions span residues 990-1009 (PNKPTQQKDDKEPQPVKKTV), 1128-1148 (MLQNKKTSSQLSREREEQERK), and 1254-1278 (RLKRNQEKEKLKGPPEKKPKKMKER). Composition is skewed to basic and acidic residues over residues 995–1004 (QQKDDKEPQP), 1139–1148 (SREREEQERK), and 1254–1270 (RLKRNQEKEKLKGPPEK). The HMG box DNA-binding region spans 1216-1294 (VRIRTTKDEE…CGACGAIGHM (79 aa)). Positions 1363-1650 (VLKFPKQQLP…TAKEAALEEA (288 aa)) are interaction with ASF1A and ASF1B. Positions 1372–1379 (PPKKKRRV) match the Nuclear localization signal motif. Bromo domains follow at residues 1397-1505 (RRRT…LKEK) and 1519-1628 (LLDD…LTEY). Residues 1446-1891 (MDLQTLRENV…AGDTDLDSDE (446 aa)) enclose the Protein kinase 2 domain. Disordered regions lie at residues 1651-1676 (ELESLDPMTPGPYTPQPPDLYDNNTS) and 1690-1891 (SNLS…DSDE). Pro residues predominate over residues 1659–1668 (TPGPYTPQPP). Phosphoserine occurs at positions 1690 and 1693. Residues 1690–1708 (SNLSVLDIPSATSEKQLTQ) are compositionally biased toward polar residues. 2 stretches are compositionally biased toward acidic residues: residues 1711-1723 (GDGDGDLADEEEG) and 1741-1756 (EGEDDEEDAGSDEEGD). Low complexity predominate over residues 1764–1778 (LSESGSDSDVESGSL). Phosphoserine is present on residues S1799, S1802, and S1820. The segment covering 1830 to 1840 (KSNTQDTSFSS) has biased composition (polar residues). Residues 1846–1855 (VSEEEEDEEE) are compositionally biased toward acidic residues. At S1847 the chain carries Phosphoserine. Residues 1858 to 1867 (SGPSVLSQVH) are compositionally biased toward polar residues.

Belongs to the TAF1 family. In terms of assembly, component of the TFIID basal transcription factor complex, composed of TATA-box-binding protein TBP, and a number of TBP-associated factors (TAFs). TFIID consists of at least TBP, TAF1, TAF2, TAF3, TAF4, TAF5, TAF6, TAF7, TAF8, TAF9, TAF10, TAF11, TAF12 and TAF13. Interacts with TAF7; the interaction is direct. TAF1, when part of the TFIID complex, interacts with C-terminus of TP53. Part of a TFIID-containing RNA polymerase II pre-initiation complex that is composed of TBP and at least GTF2A1, GTF2A2, GTF2E1, GTF2E2, GTF2F1, GTF2H2, GTF2H3, GTF2H4, GTF2H5, GTF2B, TCEA1, ERCC2, ERCC3, TAF1, TAF2, TAF3, TAF4, TAF5, TAF6, TAF7, TAF8, TAF9, TAF10, TAF11, TAF12 and TAF13. Component of some MLL1/MLL complex, at least composed of the core components KMT2A/MLL1, ASH2L, HCFC1/HCF1, WDR5 and RBBP5, as well as the facultative components BACC1, CHD8, E2F6, HSP70, INO80C, KANSL1, LAS1L, MAX, MCRS1, MGA, KAT8/MOF, PELP1, PHF20, PRP31, RING2, RUVB1/TIP49A, RUVB2/TIP49B, SENP3, TAF1, TAF4, TAF6, TAF7, TAF9 and TEX10. RB1 interacts with the N-terminal domain of TAF1. Interacts with ASF1A and ASF1B. Interacts (via bromo domains) with acetylated lysine residues on the N-terminus of histone H1.4, H2A, H2B, H3 and H4 (in vitro). Mg(2+) serves as cofactor. In terms of processing, phosphorylated by casein kinase II in vitro.

The protein resides in the nucleus. It carries out the reaction L-seryl-[protein] + ATP = O-phospho-L-seryl-[protein] + ADP + H(+). The catalysed reaction is L-threonyl-[protein] + ATP = O-phospho-L-threonyl-[protein] + ADP + H(+). The enzyme catalyses L-lysyl-[protein] + acetyl-CoA = N(6)-acetyl-L-lysyl-[protein] + CoA + H(+). Its activity is regulated as follows. Autophosphorylates on Ser residues. Inhibited by retinoblastoma tumor suppressor protein, RB1. Binding to TAF1 or CIITA inhibits the histone acetyltransferase activity. In terms of biological role, the TFIID basal transcription factor complex plays a major role in the initiation of RNA polymerase II (Pol II)-dependent transcription. TFIID recognizes and binds promoters with or without a TATA box via its subunit TBP, a TATA-box-binding protein, and promotes assembly of the pre-initiation complex (PIC). The TFIID complex consists of TBP and TBP-associated factors (TAFs), including TAF1, TAF2, TAF3, TAF4, TAF5, TAF6, TAF7, TAF8, TAF9, TAF10, TAF11, TAF12 and TAF13. TAF1 is the largest component and core scaffold of the TFIID complex, involved in nucleating complex assembly. TAF1 forms a promoter DNA binding subcomplex of TFIID, together with TAF7 and TAF2. Contains novel N- and C-terminal Ser/Thr kinase domains which can autophosphorylate or transphosphorylate other transcription factors. Phosphorylates TP53 on 'Thr-55' which leads to MDM2-mediated degradation of TP53. Phosphorylates GTF2A1 and GTF2F1 on Ser residues. Possesses DNA-binding activity. Exhibits histone acetyltransferase activity towards histones H3 and H4. Essential for progression of the G1 phase of the cell cycle. This Mus musculus (Mouse) protein is Transcription initiation factor TFIID subunit 1.